A 165-amino-acid polypeptide reads, in one-letter code: Interferon gamma (165 aa).

An N-terminal signal peptide occupies residues 1 to 23 (MKYTSYILAFQLCIVLGSLGCYC). Q24 carries the post-translational modification Pyrrolidone carboxylic acid. N-linked (GlcNAc...) asparagine glycans are attached at residues N48 and N120.

This sequence belongs to the type II (or gamma) interferon family. As to quaternary structure, homodimer. Interacts with IFNGR1 (via extracellular domain); this interaction promotes IFNGR1 dimerization.

The protein resides in the secreted. Functionally, type II interferon produced by immune cells such as T-cells and NK cells that plays crucial roles in antimicrobial, antiviral, and antitumor responses by activating effector immune cells and enhancing antigen presentation. Primarily signals through the JAK-STAT pathway after interaction with its receptor IFNGR1 to affect gene regulation. Upon IFNG binding, IFNGR1 intracellular domain opens out to allow association of downstream signaling components JAK2, JAK1 and STAT1, leading to STAT1 activation, nuclear translocation and transcription of IFNG-regulated genes. Many of the induced genes are transcription factors such as IRF1 that are able to further drive regulation of a next wave of transcription. Plays a role in class I antigen presentation pathway by inducing a replacement of catalytic proteasome subunits with immunoproteasome subunits. In turn, increases the quantity, quality, and repertoire of peptides for class I MHC loading. Increases the efficiency of peptide generation also by inducing the expression of activator PA28 that associates with the proteasome and alters its proteolytic cleavage preference. Up-regulates as well MHC II complexes on the cell surface by promoting expression of several key molecules such as cathepsins B/CTSB, H/CTSH, and L/CTSL. Participates in the regulation of hematopoietic stem cells during development and under homeostatic conditions by affecting their development, quiescence, and differentiation. The polypeptide is Interferon gamma (IFNG) (Papio anubis (Olive baboon)).